We begin with the raw amino-acid sequence, 520 residues long: Dual specificity tyrosine-phosphorylation-regulated kinase 4 (520 aa).

The segment at 1–32 is disordered; sequence MPASELKASEIPFHPSIKTQDPKAEEKSPKKQ. A Bipartite nuclear localization signal motif is present at residues 19-37; the sequence is TQDPKAEEKSPKKQKVTLT. The span at 20–29 shows a compositional bias: basic and acidic residues; sequence QDPKAEEKSP. In terms of domain architecture, Protein kinase spans 104 to 400; that stretch reads YEVLETIGKG…PDQALKHAWI (297 aa). ATP-binding positions include 110 to 118, Lys-133, and 183 to 186; these read IGKGSFGQV and FELL. Asp-230 acts as the Proton acceptor in catalysis. Position 264 is a phosphotyrosine; by autocatalysis (Tyr-264). Residues 404 to 467 are disordered; that stretch reads RNLKPQPRPQ…KHVQHSGDQQ (64 aa). Residues 439–457 show a composition bias toward basic and acidic residues; the sequence is RKADEITKETTEKTKDSPT.

This sequence belongs to the protein kinase superfamily. CMGC Ser/Thr protein kinase family. MNB/DYRK subfamily. Requires Mg(2+) as cofactor. Autophosphorylation on Tyr-264 in the activation loop is required for kinase activity.

The protein localises to the cytoplasm. Its subcellular location is the nucleus. It carries out the reaction L-seryl-[protein] + ATP = O-phospho-L-seryl-[protein] + ADP + H(+). The enzyme catalyses L-threonyl-[protein] + ATP = O-phospho-L-threonyl-[protein] + ADP + H(+). The catalysed reaction is L-tyrosyl-[protein] + ATP = O-phospho-L-tyrosyl-[protein] + ADP + H(+). Possible non-essential role in spermiogenesis. The chain is Dual specificity tyrosine-phosphorylation-regulated kinase 4 (DYRK4) from Homo sapiens (Human).